An 869-amino-acid polypeptide reads, in one-letter code: Alanine--tRNA ligase (869 aa).

Residues His559, His563, Cys660, and His664 each contribute to the Zn(2+) site.

It belongs to the class-II aminoacyl-tRNA synthetase family. Requires Zn(2+) as cofactor.

The protein localises to the cytoplasm. The enzyme catalyses tRNA(Ala) + L-alanine + ATP = L-alanyl-tRNA(Ala) + AMP + diphosphate. Functionally, catalyzes the attachment of alanine to tRNA(Ala) in a two-step reaction: alanine is first activated by ATP to form Ala-AMP and then transferred to the acceptor end of tRNA(Ala). Also edits incorrectly charged Ser-tRNA(Ala) and Gly-tRNA(Ala) via its editing domain. The polypeptide is Alanine--tRNA ligase (Janthinobacterium sp. (strain Marseille) (Minibacterium massiliensis)).